The following is a 368-amino-acid chain: Probable dual-specificity RNA methyltransferase RlmN (368 aa).

E108 serves as the catalytic Proton acceptor. Positions 114 to 345 constitute a Radical SAM core domain; it reads HAYGNSVCVS…VTVRRGLGAD (232 aa). C121 and C350 form a disulfide bridge. The [4Fe-4S] cluster site is built by C128, C132, and C135. S-adenosyl-L-methionine is bound by residues 175 to 176, S207, 230 to 232, and N307; these read GE and SLH. C350 (S-methylcysteine intermediate) is an active-site residue.

This sequence belongs to the radical SAM superfamily. RlmN family. It depends on [4Fe-4S] cluster as a cofactor.

It is found in the cytoplasm. It carries out the reaction adenosine(2503) in 23S rRNA + 2 reduced [2Fe-2S]-[ferredoxin] + 2 S-adenosyl-L-methionine = 2-methyladenosine(2503) in 23S rRNA + 5'-deoxyadenosine + L-methionine + 2 oxidized [2Fe-2S]-[ferredoxin] + S-adenosyl-L-homocysteine. The enzyme catalyses adenosine(37) in tRNA + 2 reduced [2Fe-2S]-[ferredoxin] + 2 S-adenosyl-L-methionine = 2-methyladenosine(37) in tRNA + 5'-deoxyadenosine + L-methionine + 2 oxidized [2Fe-2S]-[ferredoxin] + S-adenosyl-L-homocysteine. Functionally, specifically methylates position 2 of adenine 2503 in 23S rRNA and position 2 of adenine 37 in tRNAs. The polypeptide is Probable dual-specificity RNA methyltransferase RlmN (Pelotomaculum thermopropionicum (strain DSM 13744 / JCM 10971 / SI)).